The following is a 459-amino-acid chain: Ribulose bisphosphate carboxylase/oxygenase activase, chloroplastic (459 aa).

164 to 171 (GGKGQGKS) contacts ATP.

It belongs to the RuBisCO activase family.

It is found in the plastid. Its subcellular location is the chloroplast stroma. Functionally, activation of RuBisCO (ribulose-1,5-bisphosphate carboxylase/oxygenase; EC 4.1.1.39) involves the ATP-dependent carboxylation of the epsilon-amino group of lysine leading to a carbamate structure. The chain is Ribulose bisphosphate carboxylase/oxygenase activase, chloroplastic from Solanum pennellii (Tomato).